The chain runs to 361 residues: G-protein coupled receptor 183 (361 aa).

Residues Met-1–Arg-31 are Extracellular-facing. Residues Ile-32–Val-57 traverse the membrane as a helical segment. The Cytoplasmic portion of the chain corresponds to Gln-58–Asp-77. A helical membrane pass occupies residues Ile-78–Phe-95. Arg-87 serves as a coordination point for 7alpha,25-dihydroxycholesterol. The Extracellular segment spans residues Asp-96–Arg-105. The cysteines at positions 104 and 181 are disulfide-linked. Residues Ile-106 to Ile-127 form a helical membrane-spanning segment. 7alpha,25-dihydroxycholesterol is bound by residues Tyr-112 and Tyr-116. An interaction with G proteins region spans residues Ser-126–Val-134. At Asp-128 to Lys-149 the chain is on the cytoplasmic side. Residues Gly-150–Ile-168 form a helical membrane-spanning segment. The Extracellular portion of the chain corresponds to Asn-169 to Ser-192. The chain crosses the membrane as a helical span at residues Leu-193 to Cys-215. At Tyr-216–Lys-241 the chain is on the cytoplasmic side. The chain crosses the membrane as a helical span at residues Ala-242–Ile-265. A 7alpha,25-dihydroxycholesterol-binding site is contributed by Tyr-260. Residues Gln-266–Gln-287 are Extracellular-facing. The chain crosses the membrane as a helical span at residues Ile-288 to Cys-312. Over Lys-313–Lys-361 the chain is Cytoplasmic. The residue at position 328 (Ser-328) is a Phosphoserine. The tract at residues Glu-340–Lys-361 is disordered. The segment covering Glu-348 to Lys-361 has biased composition (polar residues).

This sequence belongs to the G-protein coupled receptor 1 family. As to quaternary structure, homodimer and heterodimer. Heterodimerizes with CXCR5; leading to modulate the interaction between of CXCL13 and CXCR5. Expressed abundantly in lymphoid tissues such as spleen and lymph node, and in B- and T-lymphocytes. Also highly expressed in lung, heart and gastrointestinal tract, and weakly expressed in the urogenital system and brain. Expressed in astrocytes.

The protein localises to the cell membrane. Its function is as follows. G-protein coupled receptor expressed in lymphocytes that acts as a chemotactic receptor for B-cells, T-cells, splenic dendritic cells, monocytes/macrophages and astrocytes. Receptor for oxysterol 7-alpha,25-dihydroxycholesterol (7-alpha,25-OHC) and other related oxysterols. Mediates cell positioning and movement of a number of cells by binding the 7-alpha,25-OHC ligand that forms a chemotactic gradient. Binding of 7-alpha,25-OHC mediates the correct localization of B-cells during humoral immune responses. Guides B-cell movement along the B-cell zone-T-cell zone boundary and later to interfollicular and outer follicular regions. Its specific expression during B-cell maturation helps position B-cells appropriately for mounting T-dependent antibody responses. Collaborates with CXCR5 to mediate B-cell migration; probably by forming a heterodimer with CXCR5 that affects the interaction between of CXCL13 and CXCR5. Also acts as a chemotactic receptor for some T-cells upon binding to 7-alpha,25-OHC ligand. Promotes follicular helper T (Tfh) cells differentiation by positioning activated T-cells at the follicle-T-zone interface, promoting contact of newly activated CD4 T-cells with activated dendritic cells and exposing them to Tfh-cell-promoting inducible costimulator (ICOS) ligand. Expression in splenic dendritic cells is required for their homeostasis, localization and ability to induce B- and T-cell responses: GPR183 acts as a chemotactic receptor in dendritic cells that mediates the accumulation of CD4(+) dendritic cells in bridging channels. Regulates migration of astrocytes and is involved in communication between astrocytes and macrophages. Promotes osteoclast precursor migration to bone surfaces. Signals constitutively through G(i)-alpha, but not G(s)-alpha or G(q)-alpha. Signals constitutively also via MAPK1/3 (ERK1/2). The chain is G-protein coupled receptor 183 from Homo sapiens (Human).